The sequence spans 360 residues: Photosystem II protein D1 3 (360 aa).

3 consecutive transmembrane segments (helical) span residues 29-46 (YVGW…TAAI), 118-133 (HFLI…QWEL), and 142-156 (WIPV…AATA). His118 provides a ligand contact to chlorophyll a. Tyr126 contacts pheophytin a. [CaMn4O5] cluster contacts are provided by Asp170 and Glu189. A helical transmembrane segment spans residues 197–218 (FHMIGVAGVFGGALFSAMHGSL). His198 provides a ligand contact to chlorophyll a. A quinone is bound by residues His215 and 264-265 (SF). A Fe cation-binding site is contributed by His215. Position 272 (His272) interacts with Fe cation. A helical transmembrane segment spans residues 274-288 (FLAAWPVIGIWFAAL). [CaMn4O5] cluster contacts are provided by His332, Glu333, Asp342, and Ala344. A propeptide spanning residues 345-360 (SGEVQPIALTAPAIAS) is cleaved from the precursor.

This sequence belongs to the reaction center PufL/M/PsbA/D family. As to quaternary structure, PSII is composed of 1 copy each of membrane proteins PsbA, PsbB, PsbC, PsbD, PsbE, PsbF, PsbH, PsbI, PsbJ, PsbK, PsbL, PsbM, PsbT, PsbX, PsbY, PsbZ, Psb30/Ycf12, peripheral proteins PsbO, CyanoQ (PsbQ), PsbU, PsbV and a large number of cofactors. It forms dimeric complexes. The D1/D2 heterodimer binds P680, chlorophylls that are the primary electron donor of PSII, and subsequent electron acceptors. It shares a non-heme iron and each subunit binds pheophytin, quinone, additional chlorophylls, carotenoids and lipids. D1 provides most of the ligands for the Mn4-Ca-O5 cluster of the oxygen-evolving complex (OEC). There is also a Cl(-1) ion associated with D1 and D2, which is required for oxygen evolution. The PSII complex binds additional chlorophylls, carotenoids and specific lipids. serves as cofactor. In terms of processing, tyr-161 forms a radical intermediate that is referred to as redox-active TyrZ, YZ or Y-Z. Post-translationally, C-terminally processed by CtpA; processing is essential to allow assembly of the oxygen-evolving complex and thus photosynthetic growth.

The protein localises to the cellular thylakoid membrane. The enzyme catalyses 2 a plastoquinone + 4 hnu + 2 H2O = 2 a plastoquinol + O2. In terms of biological role, photosystem II (PSII) is a light-driven water:plastoquinone oxidoreductase that uses light energy to abstract electrons from H(2)O, generating O(2) and a proton gradient subsequently used for ATP formation. It consists of a core antenna complex that captures photons, and an electron transfer chain that converts photonic excitation into a charge separation. The D1/D2 (PsbA/PsbD) reaction center heterodimer binds P680, the primary electron donor of PSII as well as several subsequent electron acceptors. This chain is Photosystem II protein D1 3, found in Nostoc sp. (strain PCC 7120 / SAG 25.82 / UTEX 2576).